Consider the following 346-residue polypeptide: MTYALEVDGVDKSFGGATILRGVAFAVESGSTTAIVGPSGCGKTTLLRLIAGFEKPDAGTIALAGRVVAGGGWAPAHRRSVGYVAQDGALFPHATVGANVGFGLPRRARTPARIAELLEMVSLDPSYAARRPDQLSGGQQQRVALARALAREPELMLLDEPFSALDAGLRANTRRIVADVLAKAAITTILVTHDQPEALSFADRVAVMRAGRLAQIGTPREIYSTPIDVPTAEFIGDAVVLSAHVDGSRARCALGDVAVAANGVHGNARVMVRPEQIELTPDGAGVSGTVVDVEYLGSEMLLGIRLNTADGMVPERVTVRRFGATTLTPGDRVGIRVLGKAVAYPA.

Residues 5 to 235 enclose the ABC transporter domain; the sequence is LEVDGVDKSF…PIDVPTAEFI (231 aa). 37–44 is a binding site for ATP; it reads GPSGCGKT.

The protein belongs to the ABC transporter superfamily. Fe(3+) ion importer (TC 3.A.1.10) family. As to quaternary structure, the complex is composed of two ATP-binding proteins (FbpC), two transmembrane proteins (FbpB) and a solute-binding protein (FbpA).

The protein localises to the cell membrane. The catalysed reaction is Fe(3+)(out) + ATP + H2O = Fe(3+)(in) + ADP + phosphate + H(+). Functionally, part of the ABC transporter complex FbpABC involved in Fe(3+) ions import. Responsible for energy coupling to the transport system. The protein is Fe(3+) ions import ATP-binding protein FbpC 1 of Rhodococcus jostii (strain RHA1).